Here is a 983-residue protein sequence, read N- to C-terminus: Ephrin type-A receptor 3 (983 aa).

The first 19 residues, 1–19, serve as a signal peptide directing secretion; sequence MDRRRLPLLLLCAALGSAG. Topologically, residues 20–540 are extracellular; the sequence is RLSARPGNEV…SFSISSENSQ (521 aa). The 179-residue stretch at 28 to 206 folds into the Eph LBD domain; that stretch reads EVNLLDSKTI…YFKKCPFTVK (179 aa). N-linked (GlcNAc...) asparagine glycans are attached at residues asparagine 231, asparagine 336, asparagine 390, asparagine 403, and asparagine 492. Fibronectin type-III domains lie at 324 to 434 and 435 to 530; these read PPSA…TNQA and APSP…TSPD. Residues 541–564 form a helical membrane-spanning segment; that stretch reads VVMIAISAAVAIILLTVVVYVLIG. The Cytoplasmic portion of the chain corresponds to 565-983; sequence RFCGYKKSKH…THTKNSPVPV (419 aa). Tyrosine 596 and tyrosine 602 each carry phosphotyrosine; by autocatalysis. Residues 621–882 enclose the Protein kinase domain; sequence ISIDKVVGAG…QIVSILDKLI (262 aa). ATP is bound by residues 628–633, lysine 653, and 700–706; these read GAGEFG and EYMENGS. The residue at position 701 (tyrosine 701) is a Phosphotyrosine; by autocatalysis. Aspartate 746 (proton acceptor) is an active-site residue. Position 750–751 (750–751) interacts with ATP; sequence RN. Phosphotyrosine; by autocatalysis is present on tyrosine 779. The 65-residue stretch at 911–975 folds into the SAM domain; the sequence is SAFRTAGDWL…VSSIKTLETH (65 aa). A PDZ-binding motif is present at residues 981-983; that stretch reads VPV.

Belongs to the protein kinase superfamily. Tyr protein kinase family. Ephrin receptor subfamily. As to quaternary structure, heterotetramer upon binding of the ligand. The heterotetramer is composed of an ephrin dimer and a receptor dimer. Oligomerization is probably required to induce biological responses. Autophosphorylates upon activation by EFNA5. As to expression, highly expressed in the developing brain and embryonic tissues. In adult, the greatest levels of expression occur in the brain. It is expressed in a graded manner across the retina with the highest expression at its temporal pole. Detectable in all other adult tissues examined, except the liver.

The protein resides in the cell membrane. It carries out the reaction L-tyrosyl-[protein] + ATP = O-phospho-L-tyrosyl-[protein] + ADP + H(+). Functionally, receptor tyrosine kinase which binds promiscuously membrane-bound ephrin family ligands residing on adjacent cells, leading to contact-dependent bidirectional signaling into neighboring cells. The signaling pathway downstream of the receptor is referred to as forward signaling while the signaling pathway downstream of the ephrin ligand is referred to as reverse signaling. Highly promiscuous for ephrin-A ligands it binds preferentially EFNA5. Upon activation by EFNA5 regulates cell-cell adhesion, cytoskeletal organization and cell migration. Plays a role in cardiac cells migration and differentiation probably through activation by EFNA1. Involved in the retinotectal mapping of neurons. May also control the segregation but not the guidance of motor and sensory axons during neuromuscular circuit development. This chain is Ephrin type-A receptor 3 (EPHA3), found in Gallus gallus (Chicken).